The following is a 146-amino-acid chain: uncharacterized protein (146 aa).

This is an uncharacterized protein from Escherichia coli (strain K12).